A 176-amino-acid polypeptide reads, in one-letter code: Co-chaperone protein HscB homolog (176 aa).

The J domain maps to D8 to L80.

The protein belongs to the HscB family. In terms of assembly, interacts with HscA and stimulates its ATPase activity.

Co-chaperone involved in the maturation of iron-sulfur cluster-containing proteins. Seems to help targeting proteins to be folded toward HscA. This chain is Co-chaperone protein HscB homolog, found in Cupriavidus taiwanensis (strain DSM 17343 / BCRC 17206 / CCUG 44338 / CIP 107171 / LMG 19424 / R1) (Ralstonia taiwanensis (strain LMG 19424)).